Consider the following 211-residue polypeptide: Probable superoxide dismutase [Mn], mitochondrial (211 aa).

Mn(2+)-binding residues include histidine 36, histidine 84, aspartate 173, and histidine 177.

This sequence belongs to the iron/manganese superoxide dismutase family. As to quaternary structure, homotetramer. Requires Mn(2+) as cofactor.

It localises to the mitochondrion matrix. It carries out the reaction 2 superoxide + 2 H(+) = H2O2 + O2. Its function is as follows. Destroys superoxide anion radicals which are normally produced within the cells and which are toxic to biological systems. The polypeptide is Probable superoxide dismutase [Mn], mitochondrial (Debaryomyces hansenii (strain ATCC 36239 / CBS 767 / BCRC 21394 / JCM 1990 / NBRC 0083 / IGC 2968) (Yeast)).